Consider the following 48-residue polypeptide: Delta-stichotoxin-Hmg4b (48 aa).

3 disulfide bridges follow: Cys3/Cys43, Cys5/Cys33, and Cys26/Cys44.

The protein belongs to the sea anemone sodium channel inhibitory toxin family. Type II subfamily.

Its subcellular location is the secreted. The protein localises to the nematocyst. Its function is as follows. Binds specifically to voltage-gated sodium channels (Nav), thereby delaying their inactivation during signal transduction. Its toxicity is greater than that of RpII (AC P01534). The chain is Delta-stichotoxin-Hmg4b from Heteractis magnifica (Magnificent sea anemone).